The primary structure comprises 274 residues: Non-heme haloperoxidase (274 aa).

One can recognise an AB hydrolase-1 domain in the interval 22–254 (PIMFHHGWPL…RLKVYPGLSH (233 aa)). Catalysis depends on residues S95, D225, and H254.

It belongs to the AB hydrolase superfamily. Bacterial non-heme haloperoxidase / perhydrolase family.

This chain is Non-heme haloperoxidase (thcF), found in Rhodococcus erythropolis (Arthrobacter picolinophilus).